A 323-amino-acid chain; its full sequence is Global nitrogen regulator NrpRI (323 aa).

Residues 11 to 76 (IEIMRVIHES…TLTDLGENEM (66 aa)) are winged helix-turn-helix. The interval 86-323 (GFVISRIEEM…MLDYQTMKEI (238 aa)) is NRD.

The protein belongs to the NrpR family. In terms of assembly, forms a complex with NrpRII and the general archaeal transcription factors TBP and TFB. Interacts directly with NrpRII.

Its activity is regulated as follows. Under nitrogen limitation, binding of 2-oxoglutarate to the NrpRI/NrpRII complex decreases the binding affinity of NrpRI to DNA as well as the binding affinity of NrpRII to TBP and TFB, which leads to removal of the complex from the operator, RNA polymerase recruitment and initiation of transcription. Functionally, plays a major role in nitrogen regulation. Under nitrogen sufficiency, binds to the nifH and the glnk1 promoters, leading to repression of the transcription of the genes. The protein is Global nitrogen regulator NrpRI of Methanosarcina mazei (strain ATCC BAA-159 / DSM 3647 / Goe1 / Go1 / JCM 11833 / OCM 88) (Methanosarcina frisia).